A 238-amino-acid polypeptide reads, in one-letter code: Succinate dehydrogenase assembly factor 2, mitochondrial (238 aa).

The disordered stretch occupies residues 47 to 82 (GLKADGSRADQAEAGASQSLDKQSRTLDSVRDDTLS). Residues 68-80 (KQSRTLDSVRDDT) are compositionally biased toward basic and acidic residues.

Belongs to the SDHAF2 family. Interacts with the flavoprotein subunit within the SDH catalytic dimer.

Its subcellular location is the mitochondrion matrix. Its function is as follows. Plays an essential role in the assembly of succinate dehydrogenase (SDH), an enzyme complex (also referred to as respiratory complex II) that is a component of both the tricarboxylic acid (TCA) cycle and the mitochondrial electron transport chain, and which couples the oxidation of succinate to fumarate with the reduction of ubiquinone (coenzyme Q) to ubiquinol. Required for flavinylation (covalent attachment of FAD) of the flavoprotein subunit of the SDH catalytic dimer. This chain is Succinate dehydrogenase assembly factor 2, mitochondrial, found in Mycosarcoma maydis (Corn smut fungus).